The following is a 138-amino-acid chain: MRTLWILAVLLLGVEGNLVQFELLIMKVAKRSGLLSYSAYGCYCGWGGYGRPQDATDRCCFVHDCCYGKVTDCNPKTASYTYSEENGEIVCGGDDPCKKQVCECDRVAAICFRDNIPSYDNKYIQFPAKNCQEKPEPC.

The signal sequence occupies residues 1-16 (MRTLWILAVLLLGVEG). Cystine bridges form between Cys-42–Cys-131, Cys-44–Cys-60, Cys-59–Cys-111, Cys-65–Cys-138, Cys-66–Cys-104, Cys-73–Cys-97, and Cys-91–Cys-102. Ca(2+) is bound by residues Tyr-43, Gly-45, and Gly-47. Residue His-63 is part of the active site. Asp-64 is a Ca(2+) binding site. Asp-105 is a catalytic residue.

Ca(2+) serves as cofactor. As to expression, expressed by the venom gland.

It is found in the secreted. It catalyses the reaction a 1,2-diacyl-sn-glycero-3-phosphocholine + H2O = a 1-acyl-sn-glycero-3-phosphocholine + a fatty acid + H(+). Snake venom phospholipase A2 (PLA2) that shows very low inhibition of ADP-induced platelet aggregation in platelet-rich plasma of human, rabbit and guinea pig. PLA2 catalyzes the calcium-dependent hydrolysis of the 2-acyl groups in 3-sn-phosphoglycerides. The sequence is that of Acidic phospholipase A2 Cvv-E6b from Crotalus viridis viridis (Prairie rattlesnake).